Consider the following 514-residue polypeptide: F-box-like/WD repeat-containing protein TBL1XR1 (514 aa).

S2 carries the post-translational modification N-acetylserine. In terms of domain architecture, LisH spans 4–36; it reads SSDEVNFLVYRYLQESGFSHSAFTFGIESHISQ. Residues 41-86 form the F-box-like domain; sequence GALVPPAALISIIQKGLQYVEAEVSINEDGTLFDGRPIESLSLIDA. Residue K102 is modified to N6-acetyllysine. A disordered region spans residues 114 to 139; the sequence is AAAATNQQGSAKNGENTANGEENGAH. Low complexity predominate over residues 124–135; the sequence is AKNGENTANGEE. 8 WD repeats span residues 167–206, 223–262, 264–303, 306–344, 347–386, 389–437, 440–479, and 481–513; these read GHESEVFICAWNPVSDLLASGSGDSTARIWNLSENSTSGP, PSNKDVTSLDWNSEGTLLATGSYDGFARIWTKDGNLASTL, QHKGPIFALKWNKKGNFILSAGVDKTTIIWDAHTGEAKQQ, FHSAPALDVDWQSNNTFASCSTDMCIHVCKLGQDRPIKT, GHTNEVNAIKWDPTGNLLASCSDDMTLKIWSMKQDNCVHD, AHNK…CIHT, KHQEPVYSVAFSPDGRYLASGSFDKCVHIWNTQTGALVHS, and RGTGGIFEVCWNAAGDKVGASASDGSVCVLDLR. K277 participates in a covalent cross-link: Glycyl lysine isopeptide (Lys-Gly) (interchain with G-Cter in SUMO2).

Belongs to the WD repeat EBI family. As to quaternary structure, component of the N-Cor repressor complex, at least composed of NCOR1, NCOR2, HDAC3, TBL1X, TBL1XR1, CORO2A and GPS2. Probable component of some E3 ubiquitin ligase complex. Interacts with histones H2B and H4. Interacts with MECP2; bridges interaction between MECP2 and NCOR1. Interacts with USP44.

The protein localises to the nucleus. Functionally, F-box-like protein involved in the recruitment of the ubiquitin/19S proteasome complex to nuclear receptor-regulated transcription units. Plays an essential role in transcription activation mediated by nuclear receptors. Probably acts as integral component of the N-Cor corepressor complex that mediates the recruitment of the 19S proteasome complex, leading to the subsequent proteasomal degradation of N-Cor complex, thereby allowing cofactor exchange, and transcription activation. The protein is F-box-like/WD repeat-containing protein TBL1XR1 (Tbl1xr1) of Mus musculus (Mouse).